The chain runs to 415 residues: Adipocyte plasma membrane-associated protein (415 aa).

At 1 to 39 the chain is on the cytoplasmic side; it reads MNEPEGLRFRRLNRPHIITDETHEPQYKATSTYSGKVFR. Residues 40–60 form a helical membrane-spanning segment; sequence VTLLTMVAFLLLPLLVVVFVL. Over 61–412 the chain is Extracellular; that stretch reads ESPIQPEVFS…RSPYLCKLDL (352 aa). N-linked (GlcNAc...) asparagine glycosylation occurs at asparagine 159.

It belongs to the strictosidine synthase family.

It localises to the membrane. The sequence is that of Adipocyte plasma membrane-associated protein (apmap) from Danio rerio (Zebrafish).